The following is a 151-amino-acid chain: Ribosome maturation factor RimP (151 aa).

It belongs to the RimP family.

The protein localises to the cytoplasm. Its function is as follows. Required for maturation of 30S ribosomal subunits. In Shewanella sediminis (strain HAW-EB3), this protein is Ribosome maturation factor RimP.